The following is an 876-amino-acid chain: Alanine--tRNA ligase (876 aa).

The Zn(2+) site is built by histidine 564, histidine 568, cysteine 666, and histidine 670.

It belongs to the class-II aminoacyl-tRNA synthetase family. Homotetramer. It depends on Zn(2+) as a cofactor.

Its subcellular location is the cytoplasm. The catalysed reaction is tRNA(Ala) + L-alanine + ATP = L-alanyl-tRNA(Ala) + AMP + diphosphate. Functionally, catalyzes the attachment of alanine to tRNA(Ala) in a two-step reaction: alanine is first activated by ATP to form Ala-AMP and then transferred to the acceptor end of tRNA(Ala). Also edits incorrectly charged Ser-tRNA(Ala) and Gly-tRNA(Ala) via its editing domain. The polypeptide is Alanine--tRNA ligase (Salmonella paratyphi B (strain ATCC BAA-1250 / SPB7)).